We begin with the raw amino-acid sequence, 195 residues long: uncharacterized protein (195 aa).

4 helical membrane-spanning segments follow: residues 89–106 (SWIS…PLLP), 111–128 (HLPL…VWKR), 149–168 (VKIS…VLLL), and 172–194 (LNAL…FLNI).

The protein resides in the cell membrane. This is an uncharacterized protein from Bacillus subtilis (strain 168).